Consider the following 143-residue polypeptide: Transcriptional regulator MraZ (143 aa).

SpoVT-AbrB domains are found at residues 5–47 (EYRH…PQSE) and 76–119 (ASEC…SKTL).

It belongs to the MraZ family. In terms of assembly, forms oligomers.

Its subcellular location is the cytoplasm. It is found in the nucleoid. The chain is Transcriptional regulator MraZ from Shouchella clausii (strain KSM-K16) (Alkalihalobacillus clausii).